Reading from the N-terminus, the 147-residue chain is Large ribosomal subunit protein uL15 (147 aa).

Positions 1–42 are disordered; the sequence is MTIKLHHLRPAPGSKSNKIRVGRGEGGKRGKTAGRGTKGTKA.

Belongs to the universal ribosomal protein uL15 family. Part of the 50S ribosomal subunit.

In terms of biological role, binds to the 23S rRNA. The protein is Large ribosomal subunit protein uL15 of Rhodococcus erythropolis (strain PR4 / NBRC 100887).